The sequence spans 305 residues: UDP-3-O-acyl-N-acetylglucosamine deacetylase (305 aa).

Positions 78, 237, and 241 each coordinate Zn(2+). The Proton donor role is filled by His264.

This sequence belongs to the LpxC family. The cofactor is Zn(2+).

It carries out the reaction a UDP-3-O-[(3R)-3-hydroxyacyl]-N-acetyl-alpha-D-glucosamine + H2O = a UDP-3-O-[(3R)-3-hydroxyacyl]-alpha-D-glucosamine + acetate. Its pathway is glycolipid biosynthesis; lipid IV(A) biosynthesis; lipid IV(A) from (3R)-3-hydroxytetradecanoyl-[acyl-carrier-protein] and UDP-N-acetyl-alpha-D-glucosamine: step 2/6. In terms of biological role, catalyzes the hydrolysis of UDP-3-O-myristoyl-N-acetylglucosamine to form UDP-3-O-myristoylglucosamine and acetate, the committed step in lipid A biosynthesis. In Cupriavidus taiwanensis (strain DSM 17343 / BCRC 17206 / CCUG 44338 / CIP 107171 / LMG 19424 / R1) (Ralstonia taiwanensis (strain LMG 19424)), this protein is UDP-3-O-acyl-N-acetylglucosamine deacetylase.